Reading from the N-terminus, the 360-residue chain is Phenylalanine--tRNA ligase alpha subunit (360 aa).

Residue glutamate 260 coordinates Mg(2+).

The protein belongs to the class-II aminoacyl-tRNA synthetase family. Phe-tRNA synthetase alpha subunit type 1 subfamily. Tetramer of two alpha and two beta subunits. Requires Mg(2+) as cofactor.

Its subcellular location is the cytoplasm. The enzyme catalyses tRNA(Phe) + L-phenylalanine + ATP = L-phenylalanyl-tRNA(Phe) + AMP + diphosphate + H(+). The sequence is that of Phenylalanine--tRNA ligase alpha subunit from Rhizobium etli (strain CIAT 652).